A 209-amino-acid chain; its full sequence is Ribosomal RNA large subunit methyltransferase E (209 aa).

The S-adenosyl-L-methionine site is built by Gly-63, Trp-65, Asp-83, Asp-99, and Asp-124. Lys-164 functions as the Proton acceptor in the catalytic mechanism.

Belongs to the class I-like SAM-binding methyltransferase superfamily. RNA methyltransferase RlmE family.

The protein resides in the cytoplasm. The catalysed reaction is uridine(2552) in 23S rRNA + S-adenosyl-L-methionine = 2'-O-methyluridine(2552) in 23S rRNA + S-adenosyl-L-homocysteine + H(+). Specifically methylates the uridine in position 2552 of 23S rRNA at the 2'-O position of the ribose in the fully assembled 50S ribosomal subunit. The protein is Ribosomal RNA large subunit methyltransferase E of Shewanella putrefaciens (strain CN-32 / ATCC BAA-453).